A 236-amino-acid polypeptide reads, in one-letter code: LexA repressor (236 aa).

The H-T-H motif DNA-binding region spans 26–46; that stretch reads FDEMKEALDLRSKSGIHRLIT. Catalysis depends on for autocatalytic cleavage activity residues Ser157 and Lys195.

Belongs to the peptidase S24 family. Homodimer.

The catalysed reaction is Hydrolysis of Ala-|-Gly bond in repressor LexA.. In terms of biological role, represses a number of genes involved in the response to DNA damage (SOS response), including recA and lexA. In the presence of single-stranded DNA, RecA interacts with LexA causing an autocatalytic cleavage which disrupts the DNA-binding part of LexA, leading to derepression of the SOS regulon and eventually DNA repair. This chain is LexA repressor, found in Azorhizobium caulinodans (strain ATCC 43989 / DSM 5975 / JCM 20966 / LMG 6465 / NBRC 14845 / NCIMB 13405 / ORS 571).